The following is a 330-amino-acid chain: DNA-directed RNA polymerase subunit alpha (330 aa).

The interval 1-231 (MQTNLLKPKT…EQLAVFAQLE (231 aa)) is alpha N-terminal domain (alpha-NTD). Positions 250–330 (FDPILLRPVD…NWPPAGLDKR (81 aa)) are alpha C-terminal domain (alpha-CTD).

This sequence belongs to the RNA polymerase alpha chain family. Homodimer. The RNAP catalytic core consists of 2 alpha, 1 beta, 1 beta' and 1 omega subunit. When a sigma factor is associated with the core the holoenzyme is formed, which can initiate transcription.

It catalyses the reaction RNA(n) + a ribonucleoside 5'-triphosphate = RNA(n+1) + diphosphate. Its function is as follows. DNA-dependent RNA polymerase catalyzes the transcription of DNA into RNA using the four ribonucleoside triphosphates as substrates. In Paracidovorax citrulli (strain AAC00-1) (Acidovorax citrulli), this protein is DNA-directed RNA polymerase subunit alpha.